The chain runs to 220 residues: MHNLEQKTARIDTLCREARILPVITIDREADILPMADALAAGGLTALEITLRTAHGLTAIRRLSEERPHLRIGAGTVLDPRTFAAAEKAGASFVVTPGCTDELLRFALDSEVPLLPGVASASEIMLAYRHGYRRFKLFPAEVSGGPAALKAFSGPFPDIRFCPTGGVSLNNLADYLAVPNVMCVGGTWMLPKAVVDRGDWAQVERLSREALERFAEHRRH.

The active-site Proton acceptor is Glu48. Pyruvate-binding residues include Arg52, Thr76, and Lys136. The active-site Schiff-base intermediate with substrate is the Lys136.

Belongs to the KHG/KDPG aldolase family. As to quaternary structure, homotrimer.

The catalysed reaction is 2-dehydro-3-deoxy-6-phospho-D-gluconate = D-glyceraldehyde 3-phosphate + pyruvate. The protein operates within carbohydrate acid metabolism; 2-dehydro-3-deoxy-D-gluconate degradation; D-glyceraldehyde 3-phosphate and pyruvate from 2-dehydro-3-deoxy-D-gluconate: step 2/2. Involved in the degradation of glucose via the Entner-Doudoroff pathway. Catalyzes the reversible, stereospecific retro-aldol cleavage of 2-keto-3-deoxy-6-phosphogluconate (KDPG) to pyruvate and D-glyceraldehyde-3-phosphate. In Pseudomonas aeruginosa (strain ATCC 15692 / DSM 22644 / CIP 104116 / JCM 14847 / LMG 12228 / 1C / PRS 101 / PAO1), this protein is 2-dehydro-3-deoxy-phosphogluconate aldolase (eda).